The sequence spans 97 residues: Large ribosomal subunit protein bL28 (97 aa).

It belongs to the bacterial ribosomal protein bL28 family.

This chain is Large ribosomal subunit protein bL28, found in Rickettsia africae (strain ESF-5).